The following is an 87-amino-acid chain: Small ribosomal subunit protein bS20 (87 aa).

Residues 1–27 (MANSVQATKRARQAEKHRQHNAGMRAA) are disordered. Over residues 9–20 (KRARQAEKHRQH) the composition is skewed to basic residues.

Belongs to the bacterial ribosomal protein bS20 family.

Binds directly to 16S ribosomal RNA. The sequence is that of Small ribosomal subunit protein bS20 from Hydrogenovibrio crunogenus (strain DSM 25203 / XCL-2) (Thiomicrospira crunogena).